Consider the following 47-residue polypeptide: U18-ctenitoxin-Pn1a (47 aa).

Cystine bridges form between Cys-2–Cys-16, Cys-9–Cys-22, Cys-13–Cys-46, Cys-15–Cys-34, and Cys-24–Cys-32.

Expressed by the venom gland.

It localises to the secreted. Functionally, neurotoxin. Causes spastic paralysis and death in mice by intracerebroventricular injection at dose levels of 3 ug per mouse. This is U18-ctenitoxin-Pn1a from Phoneutria nigriventer (Brazilian armed spider).